Consider the following 598-residue polypeptide: Chaperone protein DnaK (598 aa).

Thr-175 carries the post-translational modification Phosphothreonine; by autocatalysis. Low complexity predominate over residues 571-591; that stretch reads AKSAAASSNKDDSLNNNSSSN. The segment at 571-598 is disordered; it reads AKSAAASSNKDDSLNNNSSSNNDEETFE.

The protein belongs to the heat shock protein 70 family.

Its function is as follows. Acts as a chaperone. The protein is Chaperone protein DnaK of Mycoplasmopsis agalactiae (strain NCTC 10123 / CIP 59.7 / PG2) (Mycoplasma agalactiae).